Reading from the N-terminus, the 510-residue chain is Hydroperoxide bicyclase CYP5164A3, mitochondrial (510 aa).

The transit peptide at 1-31 (MQRVGAASPTCSSLQAPAAAPPILTISPHHR) directs the protein to the mitochondrion. Cys-452 contacts heme.

It belongs to the cytochrome P450 family. It depends on heme as a cofactor.

It localises to the mitochondrion. The catalysed reaction is (13S)-hydroperoxy-(9Z,11E,15Z)-octadecatrienoate = plasmodiophorol A. It catalyses the reaction (13S)-hydroperoxy-(9Z,11E,15Z)-octadecatrienoate = plasmodiophorol B. The enzyme catalyses (13S)-hydroperoxy-(9Z,11E,15Z)-octadecatrienoate = ectocarpin A + H2O. It carries out the reaction (15S)-hydroperoxy-(5Z,8Z,11Z,13E,17Z)-eicosapentaenoate = ectocarpin B + H2O. The catalysed reaction is (15S)-hydroperoxy-(5Z,8Z,11Z,13E,17Z)-eicosapentaenoate = ectocarpin C. It catalyses the reaction (15S)-hydroperoxy-(5Z,8Z,11Z,13E,17Z)-eicosapentaenoate + H2O = ectocarpin D. The enzyme catalyses (15S)-hydroperoxy-(5Z,8Z,11Z,13E,17Z)-eicosapentaenoate = 14-oxo-15-hydroxy-(5Z,8Z,11Z,17Z)-eicosatetraenoate. The protein operates within lipid metabolism; oxylipin biosynthesis. Functionally, cytochrome P450 hydroperoxide bicyclase involved in the metabolism of oxylipins 'ectocarpins' natural products, such as hybridalactone, ecklonilactones and derivatives. Isomerizes the hydroperoxides into epoxyalcohols via epoxyallylic radical. Can use alpha-linolenic acid 13(S)-hydroperoxide (13-HPOTE) and eicosapentaenoic acid 15(S)-hydroperoxide (15-HPEPE) as preferred substrate to produce corresponding heterobicyclic oxylipins, such as plasmodiophorol A (6-oxabicyclo[3.1.0]hexane), plasmodiophorol B (2-oxabicyclo[2.2.1]heptane) and plasmodiophorol C (4-hydroxymethyl-1,2-dihydroxycyclopentane) as well as ectocarpin A (3-propenyl-6-oxabicyclo[3.1.0]hexane) formed at about 15:3:3:1 ratio for 13-HPOTE, and analogous to plasmodiophorols A and B including ectocarpin B (3-[(1'E)-propenyl]-6-oxabicyclo[3.1.0]hexane), ectocarpin C, 14-oxo-15-hydroxy-5,8,11,17-eicosate-traenoic acid and ectocarpin D for 15-HPEPE. Barely able to use linoleic acid 13-hydroperoxide (13-HPODE), linoleic acid 9-hydroperoxide (9-HPODE), eicosapentaenoic acid 15-hydroperoxide (15-HPEPE), and alpha-linolenic acid 9-hydroperoxide (9-HPOTE) as substrates. This is Hydroperoxide bicyclase CYP5164A3, mitochondrial from Ectocarpus siliculosus (Brown alga).